Here is a 304-residue protein sequence, read N- to C-terminus: GTP cyclohydrolase FolE2 (304 aa).

Belongs to the GTP cyclohydrolase IV family.

It carries out the reaction GTP + H2O = 7,8-dihydroneopterin 3'-triphosphate + formate + H(+). It functions in the pathway cofactor biosynthesis; 7,8-dihydroneopterin triphosphate biosynthesis; 7,8-dihydroneopterin triphosphate from GTP: step 1/1. Functionally, converts GTP to 7,8-dihydroneopterin triphosphate. The chain is GTP cyclohydrolase FolE2 from Bdellovibrio bacteriovorus (strain ATCC 15356 / DSM 50701 / NCIMB 9529 / HD100).